The sequence spans 467 residues: UDP-N-acetylmuramate--L-alanine ligase (467 aa).

114 to 120 (GTHGKTT) lines the ATP pocket.

Belongs to the MurCDEF family.

The protein localises to the cytoplasm. It catalyses the reaction UDP-N-acetyl-alpha-D-muramate + L-alanine + ATP = UDP-N-acetyl-alpha-D-muramoyl-L-alanine + ADP + phosphate + H(+). It functions in the pathway cell wall biogenesis; peptidoglycan biosynthesis. Cell wall formation. This chain is UDP-N-acetylmuramate--L-alanine ligase, found in Rhodopseudomonas palustris (strain TIE-1).